The sequence spans 485 residues: Putative phosphoethanolamine transferase HI_1064 (485 aa).

The next 4 membrane-spanning stretches (helical) occupy residues 33-53 (ILPALFAVICAAFAGYFILIG), 55-75 (GMFTEPSVALILLATITILLL), 81-101 (SFYFILLPLTLLHAFYTPTGL), and 125-145 (FLLQIPVSSYLIAFAIPILIF).

Belongs to the phosphoethanolamine transferase family.

The protein resides in the cell membrane. This chain is Putative phosphoethanolamine transferase HI_1064, found in Haemophilus influenzae (strain ATCC 51907 / DSM 11121 / KW20 / Rd).